A 447-amino-acid chain; its full sequence is Ribulose bisphosphate carboxylase large chain (447 aa).

2 residues coordinate substrate: asparagine 89 and threonine 139. Lysine 141 functions as the Proton acceptor in the catalytic mechanism. Lysine 143 is a substrate binding site. Lysine 167, aspartate 169, and glutamate 170 together coordinate Mg(2+). An N6-carboxylysine modification is found at lysine 167. Histidine 260 acts as the Proton acceptor in catalysis. Residues arginine 261, histidine 293, and serine 345 each coordinate substrate.

This sequence belongs to the RuBisCO large chain family. Type I subfamily. Heterohexadecamer of 8 large chains and 8 small chains; disulfide-linked. The disulfide link is formed within the large subunit homodimers. Requires Mg(2+) as cofactor. Post-translationally, the disulfide bond which can form in the large chain dimeric partners within the hexadecamer appears to be associated with oxidative stress and protein turnover.

It localises to the plastid. The protein resides in the chloroplast. The catalysed reaction is 2 (2R)-3-phosphoglycerate + 2 H(+) = D-ribulose 1,5-bisphosphate + CO2 + H2O. It carries out the reaction D-ribulose 1,5-bisphosphate + O2 = 2-phosphoglycolate + (2R)-3-phosphoglycerate + 2 H(+). In terms of biological role, ruBisCO catalyzes two reactions: the carboxylation of D-ribulose 1,5-bisphosphate, the primary event in carbon dioxide fixation, as well as the oxidative fragmentation of the pentose substrate in the photorespiration process. Both reactions occur simultaneously and in competition at the same active site. This Ligustrum vulgare (Common privet) protein is Ribulose bisphosphate carboxylase large chain.